We begin with the raw amino-acid sequence, 300 residues long: Probable L-serine dehydratase, alpha chain (300 aa).

This sequence belongs to the iron-sulfur dependent L-serine dehydratase family. As to quaternary structure, heterodimer of an alpha chain and a beta chain. The cofactor is [4Fe-4S] cluster.

It carries out the reaction L-serine = pyruvate + NH4(+). It functions in the pathway carbohydrate biosynthesis; gluconeogenesis. This is Probable L-serine dehydratase, alpha chain (sdaAA) from Bacillus subtilis (strain 168).